The sequence spans 447 residues: Omega-6 fatty acid desaturase, chloroplastic (447 aa).

A chloroplast-targeting transit peptide spans 1–65 (MESAITISNH…TRRKSTLVQA (65 aa)). V66 is subject to N-acetylvaline. The short motif at 171–175 (HDCAH) is the Histidine box-1 element. Positions 207 to 211 (HDQHH) match the Histidine box-2 motif. A Histidine box-3 motif is present at residues 367–371 (HIPHH).

It belongs to the fatty acid desaturase type 1 family.

It is found in the plastid. The protein resides in the chloroplast membrane. It carries out the reaction a (9Z)-octadecenoyl-containing glycerolipid + 2 reduced [2Fe-2S]-[ferredoxin] + O2 + 2 H(+) = a (9Z,12Z)-octadecadienoyl-containing glycerolipid + 2 oxidized [2Fe-2S]-[ferredoxin] + 2 H2O. It participates in lipid metabolism; polyunsaturated fatty acid biosynthesis. Chloroplast omega-6 fatty acid desaturase introduces the second double bond in the biosynthesis of 16:3 and 18:3 fatty acids, important constituents of plant membranes. It is thought to use ferredoxin as an electron donor and to act on fatty acids esterified to galactolipids, sulfolipids and phosphatidylglycerol. The chain is Omega-6 fatty acid desaturase, chloroplastic from Spinacia oleracea (Spinach).